Consider the following 543-residue polypeptide: Protein lin-14 (543 aa).

Disordered stretches follow at residues Pro-165–His-228 and Ala-268–Pro-291. The span at Ser-177–Ile-213 shows a compositional bias: polar residues. A compositionally biased stretch (low complexity) spans Ala-268–Ala-282.

In terms of processing, cleaved by caspase ced-3 in vitro.

It localises to the nucleus. Its function is as follows. Heterochronic protein which controls the choice of stage specific cell fates. Involved in the temporal progression of vulval fate patterning, possibly by inhibiting lin-12. Acts as a transcription factor involved in the stage-specific repression of insulin/insulin-like growth factor gene ins-33. The chain is Protein lin-14 (lin-14) from Caenorhabditis briggsae.